A 333-amino-acid polypeptide reads, in one-letter code: Glyceraldehyde-3-phosphate dehydrogenase (333 aa).

NAD(+) is bound by residues 11–12 (RI), Asp35, and Thr121. D-glyceraldehyde 3-phosphate-binding positions include 151-153 (SCT) and Thr182. The active-site Nucleophile is the Cys152. NAD(+) is bound at residue Asn183. D-glyceraldehyde 3-phosphate contacts are provided by residues Arg197, 210 to 211 (TG), and Arg233. Asn315 is a binding site for NAD(+).

Belongs to the glyceraldehyde-3-phosphate dehydrogenase family. As to quaternary structure, homotetramer.

The protein resides in the cytoplasm. The enzyme catalyses D-glyceraldehyde 3-phosphate + phosphate + NAD(+) = (2R)-3-phospho-glyceroyl phosphate + NADH + H(+). Its pathway is carbohydrate degradation; glycolysis; pyruvate from D-glyceraldehyde 3-phosphate: step 1/5. In terms of biological role, catalyzes the oxidative phosphorylation of glyceraldehyde 3-phosphate (G3P) to 1,3-bisphosphoglycerate (BPG) using the cofactor NAD. The first reaction step involves the formation of a hemiacetal intermediate between G3P and a cysteine residue, and this hemiacetal intermediate is then oxidized to a thioester, with concomitant reduction of NAD to NADH. The reduced NADH is then exchanged with the second NAD, and the thioester is attacked by a nucleophilic inorganic phosphate to produce BPG. The chain is Glyceraldehyde-3-phosphate dehydrogenase (gap) from Thermotoga maritima (strain ATCC 43589 / DSM 3109 / JCM 10099 / NBRC 100826 / MSB8).